Reading from the N-terminus, the 222-residue chain is Ribonuclease 3 (222 aa).

In terms of domain architecture, RNase III spans 5-127 (PIKLEKKLKL…LIGAIYLDKG (123 aa)). Glutamate 41 contributes to the Mg(2+) binding site. The active site involves aspartate 45. Mg(2+) contacts are provided by aspartate 113 and glutamate 116. The active site involves glutamate 116. In terms of domain architecture, DRBM spans 152–221 (DAKTKLQEYS…ASLCLQDIFK (70 aa)).

This sequence belongs to the ribonuclease III family. Homodimer. It depends on Mg(2+) as a cofactor.

The protein localises to the cytoplasm. It carries out the reaction Endonucleolytic cleavage to 5'-phosphomonoester.. Its function is as follows. Digests double-stranded RNA. Involved in the processing of primary rRNA transcript to yield the immediate precursors to the large and small rRNAs (23S and 16S). Processes some mRNAs, and tRNAs when they are encoded in the rRNA operon. Processes pre-crRNA and tracrRNA of type II CRISPR loci if present in the organism. The polypeptide is Ribonuclease 3 (Pelagibacter ubique (strain HTCC1062)).